The following is a 105-amino-acid chain: Larval cuticle protein 65Ag1 (105 aa).

The first 18 residues, 1–18, serve as a signal peptide directing secretion; it reads MKFLIVFVALFAVALAAP. Residues 34–103 enclose the Chitin-binding type R&amp;R domain; it reads PESFKYDWET…PQGAHLPVAP (70 aa).

Component of the cuticle of the larva. This chain is Larval cuticle protein 65Ag1, found in Drosophila melanogaster (Fruit fly).